Here is a 185-residue protein sequence, read N- to C-terminus: Ribosome-recycling factor (185 aa).

Belongs to the RRF family.

The protein localises to the cytoplasm. In terms of biological role, responsible for the release of ribosomes from messenger RNA at the termination of protein biosynthesis. May increase the efficiency of translation by recycling ribosomes from one round of translation to another. This Buchnera aphidicola subsp. Acyrthosiphon pisum (strain Tuc7) protein is Ribosome-recycling factor.